A 2748-amino-acid polypeptide reads, in one-letter code: Chalcone synthase cfoA (2748 aa).

Residues 13–511 form an adenylation (A) domain region; the sequence is RHAGESCEKV…DTVPRTVIGK (499 aa). The Carrier 1 domain occupies 535–620; the sequence is DLIEALVMAE…AVSTYLHGRL (86 aa). Ser579 is subject to O-(pantetheine 4'-phosphoryl)serine. The region spanning 641 to 1073 is the Ketosynthase family 3 (KS3) domain; it reads VEPIAIVSMA…GTNSHIILEQ (433 aa). Residues Cys813, His948, and His995 each act as for beta-ketoacyl synthase activity in the active site. The 294-residue stretch at 1196–1489 folds into the Malonyl-CoA:ACP transacylase (MAT) domain; sequence FSGQGSWMPT…ATHGTVDKLL (294 aa). A dehydratase (DH) domain region spans residues 1561-1842; the sequence is LGHEMIFNAT…ENSFSMTMTD (282 aa). The interval 1563-1707 is N-terminal hotdog fold; sequence HEMIFNATSI…GTFQLISQPN (145 aa). In terms of domain architecture, PKS/mFAS DH spans 1563 to 1866; sequence HEMIFNATSI…LRTWQPTVAG (304 aa). The Proton acceptor; for dehydratase activity role is filled by His1595. Residues 1722-1866 form a C-terminal hotdog fold region; that stretch reads AESDVNISEA…LRTWQPTVAG (145 aa). The Proton donor; for dehydratase activity role is filled by Asp1784. Residues 2031–2210 enclose the Ketoreductase (KR) domain; the sequence is GTVLITGGTG…ALSLAWGPWA (180 aa). In terms of domain architecture, Carrier 2 spans 2305 to 2383; it reads NRHDTLLGLV…ALVEYLLPRI (79 aa). The residue at position 2342 (Ser2342) is an O-(pantetheine 4'-phosphoryl)serine. A disordered region spans residues 2386-2426; sequence EPQPEVDTDSDASTTAGDTSVSRDSGKEDELSPSSSVTTLA. A compositionally biased stretch (low complexity) spans 2396–2407; it reads DASTTAGDTSVS. Positions 2519–2742 are thioester reductase (TE) domain; sequence VGLSVYSNLA…GAAGEIERWA (224 aa).

It in the N-terminal section; belongs to the NRP synthetase family. It depends on pantetheine 4'-phosphate as a cofactor.

It participates in secondary metabolite biosynthesis; flavonoid biosynthesis. Its function is as follows. Hybrid PKS-NRPS synthetase; part of the gene cluster that mediates the biosynthesis of chlorflavonin, a fungal flavonoid with acetolactate synthase inhibitory activity. Within the pathway, the PKS-NRPS cfoA, is responsible for the generation of the key precursor chalcone. The adenylation (A) domain activates benzoic acid or p-hydroxybenzoic acid which are transferred to the thiol group of the pantetheinyl residue of the T domain, and further transferred to the adjacent PKS portion of cfoA. Within the PKS portion of cfoA, benzoic acid or p-hydroxybenzoic acid act as starter units for respectively four malonyl-CoA molecules for elongation by the AT and KS domains. Afterwards, chalcone is cyclized through Claisen condensation and thereby released either spontaneously or catalyzed by the TE domain. Then, a new type of chalcone isomerase, cfoK, catalyzes the conversion of the chalcone into a flavanone by a histidine-mediated oxa-Michael addition mechanism. The desaturation of flavanone to flavone is catalyzed by a new type of flavone synthase, the flavin mononucleotide (FMN)-dependent oxidoreductase cfoJ. Monooxygenases cfoF, cfoG, and P450 cfoH are responsible for the hydroxylation of the flavonoid skeleton at sites C3, C8, and C2', respectively. Like cfoF, the dehydratase cfoI plays also a role in the hydroxylation of position C3. Methyltransferases cfoB, cfoC, and cfoD then catalyze the methylation of C7-OH, C8-OH, and C3-OH, respectively. Finally, the monooxygenase cfoE is responsible for the chlorination of flavonoid at position C3'. The protein is Chalcone synthase cfoA of Aspergillus candidus.